Reading from the N-terminus, the 280-residue chain is Divalent cation/proton antiporter GDT1 (280 aa).

At 1 to 3 (MGN) the chain is on the cytoplasmic side. A helical membrane pass occupies residues 4–24 (MIKKASLIALLPLFTAAAAAA). Topologically, residues 25-45 (TDAETSMESGSSSHLKSFLMS) are vacuolar. Residues 46–66 (VSMIGLSEIGDKTFLIAALMA) traverse the membrane as a helical segment. Topologically, residues 67–71 (MRHKR) are cytoplasmic. Residues 72-92 (VLVFSAAATSLAIMTILSGVV) form a helical membrane-spanning segment. Residues 93 to 104 (GHSAVAFLSERY) lie on the Vacuolar side of the membrane. A helical transmembrane segment spans residues 105–125 (TAFFAGILFLVFGYKLTMEGL). Topologically, residues 126 to 183 (EMSKDAGVEEEMAEVEEEIAIKDMNQDMDDVEKGGDTAYDKQLKNASIGKKIVHRIRE) are cytoplasmic. A helical membrane pass occupies residues 184 to 204 (LASFMFSPVWVQIFLMVFLGE). At 205–222 (LGDRSQISIIAMATDSDY) the chain is on the vacuolar side. The chain crosses the membrane as a helical span at residues 223-243 (WYVIAGAVIGHAICSGLAVVG). Topologically, residues 244–255 (GKLLATRISIRT) are cytoplasmic. The chain crosses the membrane as a helical span at residues 256 to 276 (ITLASSLLFFIFALMYIYQAF). The Vacuolar portion of the chain corresponds to 277–280 (TTQD).

Belongs to the GDT1 family.

The protein resides in the golgi apparatus. Its subcellular location is the cis-Golgi network membrane. It carries out the reaction Ca(2+)(in) + n H(+)(out) = Ca(2+)(out) + n H(+)(in). It catalyses the reaction Mn(2+)(in) + n H(+)(out) = Mn(2+)(out) + n H(+)(in). Its function is as follows. Divalent cation:proton antiporter that exchanges calcium or manganese ions for protons across the Golgi membrane. Mediates the reversible transport of calcium or manganese to the Golgi lumen driven by the proton gradient and possibly the membrane potential generated by V-ATPase. Provides calcium or manganese cofactors to resident Golgi enzymes and contributes to the maintenance of an acidic luminal Golgi pH required for proper functioning of the secretory pathway. The transport stoichiometry remains to be elucidated. This is Divalent cation/proton antiporter GDT1 from Saccharomyces cerevisiae (strain ATCC 204508 / S288c) (Baker's yeast).